The chain runs to 74 residues: Mitochondrial import receptor subunit TOM6 homolog (74 aa).

Residues Met-1 to Val-20 are compositionally biased toward low complexity. The disordered stretch occupies residues Met-1 to Pro-21. Ala-2 is subject to N-acetylalanine.

The protein belongs to the Tom6 family. As to quaternary structure, forms part of the preprotein translocase complex of the outer mitochondrial membrane (TOM complex) which consists of at least 7 different proteins (TOMM5, TOMM6, TOMM7, TOMM20, TOMM22, TOMM40 and TOMM70).

The protein localises to the mitochondrion outer membrane. The chain is Mitochondrial import receptor subunit TOM6 homolog (Tomm6) from Mus musculus (Mouse).